The primary structure comprises 348 residues: Chemokine C-C motif receptor-like 2 (348 aa).

The Extracellular portion of the chain corresponds to 1–43 (MANYTPAPEDDYDVFIEDDLSDDEIEPCTPYDPKILSAQLVPY). The helical transmembrane segment at 44-64 (LYTTVFMVGLLDNILVVFILV) threads the bilayer. Over 65–76 (KYKGLRQAENMS) the chain is Cytoplasmic. Residues 77–97 (FLNLALSNLGFLLTLPFWAYA) form a helical membrane-spanning segment. Over 98–110 (ASHGEGFDDPLCK) the chain is Extracellular. A disulfide bond links cysteine 109 and cysteine 187. The helical transmembrane segment at 111–131 (ILLLLYSIGLYSEAFFNVLLT) threads the bilayer. The Cytoplasmic segment spans residues 132-150 (VQRYKEFFHVRRRFSACRT). Residues 151 to 171 (VAGSIFISVLVWVTATLVTLP) form a helical membrane-spanning segment. The Extracellular portion of the chain corresponds to 172–204 (ELVSYKPQMQSQKYKCFFTGLHFLPADETFWKH). A helical transmembrane segment spans residues 205-225 (FLTLKMNILGFLLPLFAFVYC). Over 226–244 (YVRMRKTLQFRERNYGLFK) the chain is Cytoplasmic. Residues 245–265 (LVFTIMAVFLLMWGPYNIVLF) traverse the membrane as a helical segment. Topologically, residues 266 to 292 (LSAFNEHFSLHGCGSSYNLNKSVQITR) are extracellular. N-linked (GlcNAc...) asparagine glycosylation occurs at asparagine 285. The helical transmembrane segment at 293–313 (IIAATHCCVNPLLYVFLDKAF) threads the bilayer. Over 314–348 (RKHLCHLFYLCSDTAPQPTEEPAQGASGEEYHLSS) the chain is Cytoplasmic.

Belongs to the G-protein coupled receptor 1 family.

Its subcellular location is the cell membrane. In terms of biological role, receptor for CCL19 and chemerin/RARRES2. Does not appear to be a signaling receptor, but may have a role in modulating chemokine-triggered immune responses by capturing and internalizing CCL19 or by presenting RARRES2 ligand to CMKLR1, a functional signaling receptor. Plays a critical role for the development of Th2 responses. This Bos taurus (Bovine) protein is Chemokine C-C motif receptor-like 2 (CCRL2).